Here is a 449-residue protein sequence, read N- to C-terminus: Glycerol-3-phosphate acyltransferase 3 (449 aa).

Helical transmembrane passes span 9–29 (FVLL…PAMF), 146–166 (ISVR…CVLL), and 170–190 (ITLA…VGFL). The HXXXXD motif motif lies at 238–243 (HTSPID). A helical transmembrane segment spans residues 358 to 378 (MVSYILRMMTSWAIVCNVWYL).

The protein belongs to the 1-acyl-sn-glycerol-3-phosphate acyltransferase family.

It is found in the endoplasmic reticulum membrane. It catalyses the reaction sn-glycerol 3-phosphate + an acyl-CoA = a 1-acyl-sn-glycero-3-phosphate + CoA. The enzyme catalyses a 1-acyl-sn-glycero-3-phosphate + an acyl-CoA = a 1,2-diacyl-sn-glycero-3-phosphate + CoA. It carries out the reaction dodecanoyl-CoA + sn-glycerol 3-phosphate = 1-dodecanoyl-sn-glycerol 3-phosphate + CoA. The catalysed reaction is sn-glycerol 3-phosphate + hexadecanoyl-CoA = 1-hexadecanoyl-sn-glycero-3-phosphate + CoA. It catalyses the reaction sn-glycerol 3-phosphate + (9Z)-octadecenoyl-CoA = 1-(9Z-octadecenoyl)-sn-glycero-3-phosphate + CoA. The enzyme catalyses (9Z,12Z)-octadecadienoyl-CoA + sn-glycerol 3-phosphate = 1-(9Z,12Z)-octadecadienoyl-sn-glycero-3-phosphate + CoA. It carries out the reaction 1-tetradecanoyl-sn-glycerol 3-phosphate + (9Z)-octadecenoyl-CoA = 1-tetradecanoyl-2-(9Z)-octadecenoyl-sn-glycero-3-phosphate + CoA. The catalysed reaction is 1-hexadecanoyl-sn-glycero-3-phosphate + (9Z)-octadecenoyl-CoA = 1-hexadecanoyl-2-(9Z-octadecenoyl)-sn-glycero-3-phosphate + CoA. It catalyses the reaction 1-(9Z-octadecenoyl)-sn-glycero-3-phosphate + (9Z)-octadecenoyl-CoA = 1,2-di-(9Z-octadecenoyl)-sn-glycero-3-phosphate + CoA. The enzyme catalyses 1-(6Z,9Z,12Z-octadecatrienoyl)-sn-glycero-3-phosphate + (9Z)-octadecenoyl-CoA = (6Z,9Z,12Z)-octadecatrienoyl-2-(9Z)-octadecenoyl-sn-glycero-3-phosphate + CoA. It carries out the reaction 1-(9Z,12Z,15Z)-octadecatrienoyl-sn-glycero-3-phosphate + (9Z)-octadecenoyl-CoA = 1-(9Z,12Z,15Z)-octadecatrienoyl-2-(9Z)-octadecenoyl-sn-glycero-3-phosphate + CoA. The catalysed reaction is 1-(9Z-octadecenoyl)-sn-glycero-3-phosphate + tetradecanoyl-CoA = 1-(9Z)-octadecenoyl-2-tetradecanoyl-sn-glycero-3-phosphate + CoA. It catalyses the reaction 1-(9Z-octadecenoyl)-sn-glycero-3-phosphate + hexadecanoyl-CoA = 1-(9Z)-octadecenoyl-2-hexadecanoyl-sn-glycero-3-phosphate + CoA. The enzyme catalyses 1-(9Z-octadecenoyl)-sn-glycero-3-phosphate + octadecanoyl-CoA = 1-(9Z-octadecenoyl)-2-octadecanoyl-sn-glycero-3-phosphate + CoA. It carries out the reaction 1-(9Z-octadecenoyl)-sn-glycero-3-phosphate + (9Z,12Z)-octadecadienoyl-CoA = 1-(9Z)-octadecenoyl-2-(9Z,12Z)-octadecadienoyl-sn-glycero-3-phosphate + CoA. The catalysed reaction is 1-(5Z,8Z,11Z,14Z-eicosatetraenoyl)-sn-glycero-3-phosphate + (9Z)-octadecenoyl-CoA = 1-(5Z,8Z,11Z,14Z)-eicosatetraenoyl-2-(9Z)-octadecenoyl-sn-glycero-3-phosphate + CoA. It participates in glycerolipid metabolism; triacylglycerol biosynthesis. It functions in the pathway phospholipid metabolism; CDP-diacylglycerol biosynthesis; CDP-diacylglycerol from sn-glycerol 3-phosphate: step 1/3. Functionally, converts glycerol-3-phosphate to 1-acyl-sn-glycerol-3-phosphate (lysophosphatidic acid or LPA) by incorporating an acyl moiety at the sn-1 position of the glycerol backbone. Also converts LPA into 1,2-diacyl-sn-glycerol-3-phosphate (phosphatidic acid or PA) by incorporating an acyl moiety at the sn-2 position of the glycerol backbone. Protects cells against lipotoxicity. The protein is Glycerol-3-phosphate acyltransferase 3 of Danio rerio (Zebrafish).